A 296-amino-acid chain; its full sequence is Ribosomal protein L11 methyltransferase (296 aa).

S-adenosyl-L-methionine contacts are provided by Thr151, Gly172, Asp194, and Asn233.

It belongs to the methyltransferase superfamily. PrmA family.

It localises to the cytoplasm. The enzyme catalyses L-lysyl-[protein] + 3 S-adenosyl-L-methionine = N(6),N(6),N(6)-trimethyl-L-lysyl-[protein] + 3 S-adenosyl-L-homocysteine + 3 H(+). In terms of biological role, methylates ribosomal protein L11. The protein is Ribosomal protein L11 methyltransferase of Thiobacillus denitrificans (strain ATCC 25259 / T1).